The primary structure comprises 427 residues: Imidazolonepropionase (427 aa).

Residues H96 and H98 each coordinate Fe(3+). Zn(2+)-binding residues include H96 and H98. 4-imidazolone-5-propanoate contacts are provided by R105, Y168, and H201. Y168 serves as a coordination point for N-formimidoyl-L-glutamate. A Fe(3+)-binding site is contributed by H265. Residue H265 participates in Zn(2+) binding. Position 268 (Q268) interacts with 4-imidazolone-5-propanoate. Residue D340 coordinates Fe(3+). A Zn(2+)-binding site is contributed by D340. The N-formimidoyl-L-glutamate site is built by N342 and G344. T345 serves as a coordination point for 4-imidazolone-5-propanoate.

The protein belongs to the metallo-dependent hydrolases superfamily. HutI family. Zn(2+) is required as a cofactor. Fe(3+) serves as cofactor.

It is found in the cytoplasm. The enzyme catalyses 4-imidazolone-5-propanoate + H2O = N-formimidoyl-L-glutamate. It functions in the pathway amino-acid degradation; L-histidine degradation into L-glutamate; N-formimidoyl-L-glutamate from L-histidine: step 3/3. Functionally, catalyzes the hydrolytic cleavage of the carbon-nitrogen bond in imidazolone-5-propanoate to yield N-formimidoyl-L-glutamate. It is the third step in the universal histidine degradation pathway. The protein is Imidazolonepropionase of Psychrobacter cryohalolentis (strain ATCC BAA-1226 / DSM 17306 / VKM B-2378 / K5).